The primary structure comprises 617 residues: Chaperone protein HscA homolog (617 aa).

This sequence belongs to the heat shock protein 70 family.

Probable chaperone. Has a low intrinsic ATPase activity which is markedly stimulated by HscB. This is Chaperone protein HscA homolog from Vibrio parahaemolyticus serotype O3:K6 (strain RIMD 2210633).